A 114-amino-acid polypeptide reads, in one-letter code: Aspartate 1-decarboxylase (114 aa).

Residue Ser25 is the Schiff-base intermediate with substrate; via pyruvic acid of the active site. Position 25 is a pyruvic acid (Ser) (Ser25). A substrate-binding site is contributed by Thr57. The active-site Proton donor is the Tyr58. 71–73 (GAA) provides a ligand contact to substrate.

It belongs to the PanD family. In terms of assembly, heterooctamer of four alpha and four beta subunits. The cofactor is pyruvate. Is synthesized initially as an inactive proenzyme, which is activated by self-cleavage at a specific serine bond to produce a beta-subunit with a hydroxyl group at its C-terminus and an alpha-subunit with a pyruvoyl group at its N-terminus.

It localises to the cytoplasm. It carries out the reaction L-aspartate + H(+) = beta-alanine + CO2. It participates in cofactor biosynthesis; (R)-pantothenate biosynthesis; beta-alanine from L-aspartate: step 1/1. Functionally, catalyzes the pyruvoyl-dependent decarboxylation of aspartate to produce beta-alanine. The sequence is that of Aspartate 1-decarboxylase from Haloquadratum walsbyi (strain DSM 16790 / HBSQ001).